Here is a 62-residue protein sequence, read N- to C-terminus: Small ribosomal subunit protein eS27 (62 aa).

Cysteine 17, cysteine 20, cysteine 36, and cysteine 39 together coordinate Zn(2+). A C4-type zinc finger spans residues 17–39 (CPECNNEQIVFGSPATVVKCLTC).

The protein belongs to the eukaryotic ribosomal protein eS27 family. Part of the 30S ribosomal subunit. Zn(2+) is required as a cofactor.

The chain is Small ribosomal subunit protein eS27 from Methanocaldococcus jannaschii (strain ATCC 43067 / DSM 2661 / JAL-1 / JCM 10045 / NBRC 100440) (Methanococcus jannaschii).